A 428-amino-acid chain; its full sequence is 3-phosphoshikimate 1-carboxyvinyltransferase (428 aa).

3-phosphoshikimate contacts are provided by Lys-20, Ser-21, and Arg-25. Position 20 (Lys-20) interacts with phosphoenolpyruvate. Gly-92 and Arg-120 together coordinate phosphoenolpyruvate. 3-phosphoshikimate contacts are provided by Ser-166, Gln-168, Asp-314, and Lys-341. Gln-168 is a binding site for phosphoenolpyruvate. The Proton acceptor role is filled by Asp-314. Phosphoenolpyruvate is bound by residues Arg-345 and Arg-387.

Belongs to the EPSP synthase family. Monomer.

Its subcellular location is the cytoplasm. The catalysed reaction is 3-phosphoshikimate + phosphoenolpyruvate = 5-O-(1-carboxyvinyl)-3-phosphoshikimate + phosphate. It functions in the pathway metabolic intermediate biosynthesis; chorismate biosynthesis; chorismate from D-erythrose 4-phosphate and phosphoenolpyruvate: step 6/7. Its function is as follows. Catalyzes the transfer of the enolpyruvyl moiety of phosphoenolpyruvate (PEP) to the 5-hydroxyl of shikimate-3-phosphate (S3P) to produce enolpyruvyl shikimate-3-phosphate and inorganic phosphate. In Listeria monocytogenes serotype 4b (strain CLIP80459), this protein is 3-phosphoshikimate 1-carboxyvinyltransferase.